The primary structure comprises 3583 residues: Surfactin synthase subunit 2 (3583 aa).

3 consecutive Carrier domains span residues 965-1039 (APKT…EENE), 2005-2080 (APET…EASA), and 3034-3108 (APTT…ERAE). O-(pantetheine 4'-phosphoryl)serine is present on residues serine 999, serine 2040, and serine 3069.

This sequence belongs to the ATP-dependent AMP-binding enzyme family. It depends on pantetheine 4'-phosphate as a cofactor.

It functions in the pathway antibiotic biosynthesis; surfactin biosynthesis. In terms of biological role, this protein is a multifunctional enzyme able to activate and polymerize the amino acids Leu, Glu, Asp and Val. Activation sites for these AA consist of individual domains. The sequence is that of Surfactin synthase subunit 2 (srfAB) from Bacillus subtilis (strain 168).